Consider the following 736-residue polypeptide: Dynamin-1-like protein (736 aa).

M1 is modified (N-acetylmethionine). Positions 22-302 (IIQLPQIVVV…LMHHIRDCLP (281 aa)) constitute a Dynamin-type G domain. The segment at 32–39 (GTQSSGKS) is G1 motif. 32-40 (GTQSSGKSS) contacts GTP. The G2 motif stretch occupies residues 58–60 (VTR). Positions 146 to 149 (DLPG) are G3 motif. The tract at residues 215 to 218 (TKLD) is G4 motif. Residues 215–221 (TKLDLMD) and 246–249 (NRSQ) contribute to the GTP site. Residues 245 to 248 (VNRS) form a G5 motif region. A middle domain region spans residues 344–489 (YCNTIEGTAK…NEMVHNLVAI (146 aa)). The interval 448–685 (NYSTQELLRF…NHVKDTLQSE (238 aa)) is interaction with GSK3B. The segment at 502-569 (ADACGLMNNN…IQDSRRETKN (68 aa)) is b domain. Residues 523-590 (ELPSAVSRDK…VQEPTTGNWR (68 aa)) form a disordered region. A Phosphoserine modification is found at S529. Residues K532 and K535 each participate in a glycyl lysine isopeptide (Lys-Gly) (interchain with G-Cter in SUMO) cross-link. The span at 537–554 (PSALAPASQEPSPAASAE) shows a compositional bias: low complexity. Position 548 is a phosphoserine (S548). Over residues 555-568 (ADGKLIQDSRRETK) the composition is skewed to basic and acidic residues. Residues K558 and K568 each participate in a glycyl lysine isopeptide (Lys-Gly) (interchain with G-Cter in SUMO) cross-link. T585 and T586 each carry an O-linked (GlcNAc) threonine glycan. K594 is covalently cross-linked (Glycyl lysine isopeptide (Lys-Gly) (interchain with G-Cter in SUMO)). Position 597 is an N6-acetyllysine; alternate (K597). Residue K597 forms a Glycyl lysine isopeptide (Lys-Gly) (interchain with G-Cter in SUMO); alternate linkage. Residue K606 forms a Glycyl lysine isopeptide (Lys-Gly) (interchain with G-Cter in SUMO) linkage. The residue at position 607 (S607) is a Phosphoserine. Residue K608 forms a Glycyl lysine isopeptide (Lys-Gly) (interchain with G-Cter in SUMO) linkage. At S616 the chain carries Phosphoserine; by CDK1 and PINK1. A Phosphoserine; by CAMK1 and PKA modification is found at S637. C644 carries the post-translational modification S-nitrosocysteine. In terms of domain architecture, GED spans 644-735 (CEVIERLIKS…IIAEIRETHL (92 aa)). The tract at residues 654–668 (YFLIVRKNIQDSVPK) is important for homodimerization.

Belongs to the TRAFAC class dynamin-like GTPase superfamily. Dynamin/Fzo/YdjA family. Homotetramer; dimerizes through the N-terminal GTP-middle region of one molecule binding to the GED domain of another DNM1L molecule. Oligomerizes in a GTP-dependent manner to form membrane-associated tubules with a spiral pattern. Interacts with GSK3B and MARCHF5. Interacts (via the GTPase and B domains) with UBE2I; the interaction promotes sumoylation of DNM1L, mainly in its B domain. Interacts with PPP3CA; the interaction dephosphorylates DNM1L and regulates its transition to mitochondria. Interacts with BCL2L1 isoform BCL-X(L) and CLTA; DNM1L and BCL2L1 isoform BCL-X(L) may form a complex in synaptic vesicles that also contains clathrin and MFF. Interacts with MFF; the interaction is inhibited by C11orf65/MFI. Interacts with FIS1; may form part of a larger protein complex at the endoplasmic reticulum-mitochondrial interface during mitochondrial fission. Interacts with CANX. Interacts with BCAP31. Interacts with MIEF2 and MIEF1; GTP-dependent, regulates GTP hydrolysis and DNM1L oligomerization. Interacts with PGAM5; this interaction leads to dephosphorylation at Ser-656 and activation of GTPase activity and eventually to mitochondria fragmentation. Interacts with RALBP1; during mitosis, recruits DNM1L to the mitochondrion and mediates its activation by the mitotic kinase cyclin B-CDK1. Interacts with FUNDC1; this interaction recruits DNM1L/DRP1 at ER-mitochondria contact sites. Phosphorylation/dephosphorylation events on two sites near the GED domain regulate mitochondrial fission. Phosphorylation on Ser-637 by CAMK1 and PKA inhibits the GTPase activity, leading to a defect in mitochondrial fission promoting mitochondrial elongation. Dephosphorylated on this site by PPP3CA which promotes mitochondrial fission. Phosphorylation on Ser-616 by CDK1 and PINK1 activates the GTPase activity and promotes mitochondrial fission. Phosphorylated in a circadian manner at Ser-637. Dephosphorylated by PGAM5. Post-translationally, sumoylated on various lysine residues within the B domain, probably by MUL1. Sumoylation positively regulates mitochondrial fission. Desumoylated by SENP5 during G2/M transition of mitosis. Appears to be linked to its catalytic activity. In terms of processing, S-nitrosylation increases DNM1L dimerization, mitochondrial fission and causes neuronal damage. Ubiquitination by MARCHF5 affects mitochondrial morphology. Post-translationally, O-GlcNAcylation augments the level of the GTP-bound active form of DNM1L and induces translocation from the cytoplasm to mitochondria in cardiomyocytes. It also decreases phosphorylation at Ser-637. Ubiquitously expressed with highest levels found in skeletal muscles, heart, kidney and brain. Isoform 1 is brain-specific. Isoform 2 and isoform 3 are predominantly expressed in testis and skeletal muscles respectively. Isoform 4 is weakly expressed in brain, heart and kidney. Isoform 5 is dominantly expressed in liver, heart and kidney. Isoform 6 is expressed in neurons.

The protein resides in the cytoplasm. It localises to the cytosol. The protein localises to the golgi apparatus. Its subcellular location is the endomembrane system. It is found in the mitochondrion outer membrane. The protein resides in the peroxisome. It localises to the membrane. The protein localises to the clathrin-coated pit. Its subcellular location is the cytoplasmic vesicle. It is found in the secretory vesicle. The protein resides in the synaptic vesicle membrane. It catalyses the reaction GTP + H2O = GDP + phosphate + H(+). With respect to regulation, GTPase activity is increased by binding to phospholipid membranes. Functions in mitochondrial and peroxisomal division. Mediates membrane fission through oligomerization into membrane-associated tubular structures that wrap around the scission site to constrict and sever the mitochondrial membrane through a GTP hydrolysis-dependent mechanism. The specific recruitment at scission sites is mediated by membrane receptors like MFF, MIEF1 and MIEF2 for mitochondrial membranes. While the recruitment by the membrane receptors is GTP-dependent, the following hydrolysis of GTP induces the dissociation from the receptors and allows DNM1L filaments to curl into closed rings that are probably sufficient to sever a double membrane. Acts downstream of PINK1 to promote mitochondrial fission in a PRKN-dependent manner. Plays an important role in mitochondrial fission during mitosis. Through its function in mitochondrial division, ensures the survival of at least some types of postmitotic neurons, including Purkinje cells, by suppressing oxidative damage. Required for normal brain development, including that of cerebellum. Facilitates developmentally regulated apoptosis during neural tube formation. Required for a normal rate of cytochrome c release and caspase activation during apoptosis; this requirement may depend upon the cell type and the physiological apoptotic cues. Required for formation of endocytic vesicles. Proposed to regulate synaptic vesicle membrane dynamics through association with BCL2L1 isoform Bcl-X(L) which stimulates its GTPase activity in synaptic vesicles; the function may require its recruitment by MFF to clathrin-containing vesicles. Required for programmed necrosis execution. Rhythmic control of its activity following phosphorylation at Ser-637 is essential for the circadian control of mitochondrial ATP production. Functionally, inhibits peroxisomal division when overexpressed. The polypeptide is Dynamin-1-like protein (Homo sapiens (Human)).